The sequence spans 139 residues: FAD synthase (139 aa).

ATP-binding positions include 8–9, 13–16, Asp92, and Tyr119; these read VF and HPGH.

It belongs to the archaeal FAD synthase family. As to quaternary structure, homodimer. A divalent metal cation serves as cofactor.

It carries out the reaction FMN + ATP + H(+) = FAD + diphosphate. It functions in the pathway cofactor biosynthesis; FAD biosynthesis; FAD from FMN: step 1/1. Catalyzes the transfer of the AMP portion of ATP to flavin mononucleotide (FMN) to produce flavin adenine dinucleotide (FAD) coenzyme. The polypeptide is FAD synthase (Picrophilus torridus (strain ATCC 700027 / DSM 9790 / JCM 10055 / NBRC 100828 / KAW 2/3)).